Consider the following 210-residue polypeptide: Proteasome subunit beta (210 aa).

A propeptide spans 1-9 (MNDKNTLKG) (removed in mature form; by autocatalysis). Thr-10 (nucleophile) is an active-site residue.

This sequence belongs to the peptidase T1B family. In terms of assembly, the 20S proteasome core is composed of 14 alpha and 14 beta subunits that assemble into four stacked heptameric rings, resulting in a barrel-shaped structure. The two inner rings, each composed of seven catalytic beta subunits, are sandwiched by two outer rings, each composed of seven alpha subunits. The catalytic chamber with the active sites is on the inside of the barrel. Has a gated structure, the ends of the cylinder being occluded by the N-termini of the alpha-subunits. Is capped at one or both ends by the proteasome regulatory ATPase, PAN.

The protein localises to the cytoplasm. It carries out the reaction Cleavage of peptide bonds with very broad specificity.. Its activity is regulated as follows. The formation of the proteasomal ATPase PAN-20S proteasome complex, via the docking of the C-termini of PAN into the intersubunit pockets in the alpha-rings, triggers opening of the gate for substrate entry. Interconversion between the open-gate and close-gate conformations leads to a dynamic regulation of the 20S proteasome proteolysis activity. Its function is as follows. Component of the proteasome core, a large protease complex with broad specificity involved in protein degradation. This chain is Proteasome subunit beta, found in Methanothermobacter thermautotrophicus (strain ATCC 29096 / DSM 1053 / JCM 10044 / NBRC 100330 / Delta H) (Methanobacterium thermoautotrophicum).